We begin with the raw amino-acid sequence, 828 residues long: Mediator of RNA polymerase II transcription subunit 16 (828 aa).

WD repeat units follow at residues 68–107 (GHQE…ANSW), 199–241 (RCRV…VSEK), 264–308 (DKFP…LPLN), 622–663 (NQGS…CLPV), and 777–816 (FPTE…TCLC).

The protein belongs to the Mediator complex subunit 16 family. As to quaternary structure, component of the Mediator complex.

It is found in the nucleus. In terms of biological role, component of the Mediator complex, a coactivator involved in the regulated transcription of nearly all RNA polymerase II-dependent genes. Mediator functions as a bridge to convey information from gene-specific regulatory proteins to the basal RNA polymerase II transcription machinery. Mediator is recruited to promoters by direct interactions with regulatory proteins and serves as a scaffold for the assembly of a functional preinitiation complex with RNA polymerase II and the general transcription factors. The sequence is that of Mediator of RNA polymerase II transcription subunit 16 (med16) from Xenopus tropicalis (Western clawed frog).